A 106-amino-acid polypeptide reads, in one-letter code: Large ribosomal subunit protein P1A (106 aa).

An N-acetylserine modification is found at Ser-2. The segment at 73 to 106 (GGVAGGEAGEAEAEKEEEEAKEESDDDMGFGLFD) is disordered. Positions 81-100 (GEAEAEKEEEEAKEESDDDM) are enriched in acidic residues. Ser-96 carries the phosphoserine modification.

Belongs to the eukaryotic ribosomal protein P1/P2 family. In terms of assembly, component of the large ribosomal subunit (LSU). Mature yeast ribosomes consist of a small (40S) and a large (60S) subunit. The 40S small subunit contains 1 molecule of ribosomal RNA (18S rRNA) and 33 different proteins (encoded by 57 genes). The large 60S subunit contains 3 rRNA molecules (25S, 5.8S and 5S rRNA) and 46 different proteins (encoded by 81 genes). The 5 acidic ribosomal P-proteins form the stalk structure of the 60S subunit. They are organized as a pentameric complex in which uL10/P0 interacts with 2 heterodimers, P1A-P2B and P1B-P2A. In terms of processing, N-terminally acetylated by acetyltransferase NatA.

The protein resides in the cytoplasm. Component of the ribosome, a large ribonucleoprotein complex responsible for the synthesis of proteins in the cell. The small ribosomal subunit (SSU) binds messenger RNAs (mRNAs) and translates the encoded message by selecting cognate aminoacyl-transfer RNA (tRNA) molecules. The large subunit (LSU) contains the ribosomal catalytic site termed the peptidyl transferase center (PTC), which catalyzes the formation of peptide bonds, thereby polymerizing the amino acids delivered by tRNAs into a polypeptide chain. The nascent polypeptides leave the ribosome through a tunnel in the LSU and interact with protein factors that function in enzymatic processing, targeting, and the membrane insertion of nascent chains at the exit of the ribosomal tunnel. This chain is Large ribosomal subunit protein P1A, found in Saccharomyces cerevisiae (strain ATCC 204508 / S288c) (Baker's yeast).